The following is a 201-amino-acid chain: Probable quinol oxidase subunit 3 (201 aa).

5 consecutive transmembrane segments (helical) span residues 20–40 (LGFW…FATL), 62–82 (LILI…IAIY), 91–111 (LMMF…GFEI), 133–153 (FFIL…WVIC), and 172–192 (FIVS…FTAV).

Belongs to the cytochrome c oxidase subunit 3 family.

The protein resides in the cell membrane. The catalysed reaction is 2 a quinol + O2 = 2 a quinone + 2 H2O. Functionally, catalyzes quinol oxidation with the concomitant reduction of oxygen to water. The chain is Probable quinol oxidase subunit 3 (qoxC) from Staphylococcus epidermidis (strain ATCC 35984 / DSM 28319 / BCRC 17069 / CCUG 31568 / BM 3577 / RP62A).